The sequence spans 252 residues: Pyridoxine 5'-phosphate synthase (252 aa).

N12 provides a ligand contact to 3-amino-2-oxopropyl phosphate. 14–15 (DH) provides a ligand contact to 1-deoxy-D-xylulose 5-phosphate. R23 is a 3-amino-2-oxopropyl phosphate binding site. The active-site Proton acceptor is H48. Residues R50 and H55 each coordinate 1-deoxy-D-xylulose 5-phosphate. Residue E75 is the Proton acceptor of the active site. T105 lines the 1-deoxy-D-xylulose 5-phosphate pocket. The Proton donor role is filled by H199. 3-amino-2-oxopropyl phosphate contacts are provided by residues G200 and 221–222 (GH).

Belongs to the PNP synthase family. As to quaternary structure, homooctamer; tetramer of dimers.

The protein resides in the cytoplasm. It carries out the reaction 3-amino-2-oxopropyl phosphate + 1-deoxy-D-xylulose 5-phosphate = pyridoxine 5'-phosphate + phosphate + 2 H2O + H(+). The protein operates within cofactor biosynthesis; pyridoxine 5'-phosphate biosynthesis; pyridoxine 5'-phosphate from D-erythrose 4-phosphate: step 5/5. In terms of biological role, catalyzes the complicated ring closure reaction between the two acyclic compounds 1-deoxy-D-xylulose-5-phosphate (DXP) and 3-amino-2-oxopropyl phosphate (1-amino-acetone-3-phosphate or AAP) to form pyridoxine 5'-phosphate (PNP) and inorganic phosphate. The polypeptide is Pyridoxine 5'-phosphate synthase (Cereibacter sphaeroides (strain ATCC 17029 / ATH 2.4.9) (Rhodobacter sphaeroides)).